Here is a 205-residue protein sequence, read N- to C-terminus: Large ribosomal subunit protein uL4 (205 aa).

The protein belongs to the universal ribosomal protein uL4 family. Part of the 50S ribosomal subunit.

In terms of biological role, one of the primary rRNA binding proteins, this protein initially binds near the 5'-end of the 23S rRNA. It is important during the early stages of 50S assembly. It makes multiple contacts with different domains of the 23S rRNA in the assembled 50S subunit and ribosome. Its function is as follows. Forms part of the polypeptide exit tunnel. The protein is Large ribosomal subunit protein uL4 of Dinoroseobacter shibae (strain DSM 16493 / NCIMB 14021 / DFL 12).